The primary structure comprises 945 residues: Leucine--tRNA ligase (945 aa).

A 'HIGH' region motif is present at residues 43–53 (PYPNGAIHIGH). A 'KMSKS' region motif is present at residues 638 to 642 (KMSKS). ATP is bound at residue Lys-641.

It belongs to the class-I aminoacyl-tRNA synthetase family.

The protein resides in the cytoplasm. The enzyme catalyses tRNA(Leu) + L-leucine + ATP = L-leucyl-tRNA(Leu) + AMP + diphosphate. This Pyrobaculum arsenaticum (strain DSM 13514 / JCM 11321 / PZ6) protein is Leucine--tRNA ligase.